The sequence spans 312 residues: Methionyl-tRNA formyltransferase (312 aa).

110–113 (SLLP) contributes to the (6S)-5,6,7,8-tetrahydrofolate binding site.

This sequence belongs to the Fmt family.

The enzyme catalyses L-methionyl-tRNA(fMet) + (6R)-10-formyltetrahydrofolate = N-formyl-L-methionyl-tRNA(fMet) + (6S)-5,6,7,8-tetrahydrofolate + H(+). In terms of biological role, attaches a formyl group to the free amino group of methionyl-tRNA(fMet). The formyl group appears to play a dual role in the initiator identity of N-formylmethionyl-tRNA by promoting its recognition by IF2 and preventing the misappropriation of this tRNA by the elongation apparatus. The sequence is that of Methionyl-tRNA formyltransferase from Mycobacterium ulcerans (strain Agy99).